Consider the following 284-residue polypeptide: MPSSTAMVPGTRGGWHCLVLTTAAALTQLMWLPGCCGSYIVGGHEVTPHSRPYMASVSFEGHHYCGGFLIHTHWVVSAAHCFSDRDPSMGLVVLGAHALLAPEPTQQTFSIAAAVSHPDFQPATQANDICLLRLNGSAVLGPAVRLLRLPRRNAKPPAAGTRCHVSGWGFVSDFEEPPPGLMEVEVRILDLSVCNSSWQGQLNPAMLCTHSGDRRRRGFCSADSGGPLVCGRRAHGLVSFSGLWCGDPKTPDVYTQVSAFVTWIWDVVRASSSPGSTGRSVRAV.

The N-terminal stretch at Met1–Cys35 is a signal peptide. The region spanning Ile40–Arg269 is the Peptidase S1 domain. Residues Cys65 and Cys81 are joined by a disulfide bond. Active-site charge relay system residues include His80 and Asp128. N-linked (GlcNAc...) asparagine glycosylation occurs at Asn135. Intrachain disulfides connect Cys163-Cys230, Cys194-Cys208, and Cys220-Cys245. Ser224 (charge relay system) is an active-site residue.

The protein belongs to the peptidase S1 family. Post-translationally, after cleavage of the signal peptide, the N-terminus is probably further processed by CTSC. Processing by CTSC is probably required for accumulation in cytoplasmic granules; in the absence of CTSC the protein does not accumulate. In terms of processing, N-glycosylated.

The protein localises to the cytoplasmic granule lumen. It is found in the secreted. In terms of biological role, serine protease that cleaves preferentially after Arg residues. Can also cleave after citrulline (deimidated arginine) and methylarginine residues. The sequence is that of Serine protease 57 (Prss57) from Mus musculus (Mouse).